Here is a 186-residue protein sequence, read N- to C-terminus: Nuclear transcription factor Y subunit B-1 (186 aa).

Residues 1-24 (MAGNKKRGGRNMDQVKKAAVRSDG) are disordered. A DNA-binding region spans residues 34-40 (LPMANLV). The subunit association domain (SAD) stretch occupies residues 61–72 (THDCAVEFVGFV). Residues 123-142 (GGNRRVAPPPPAAATPLTPG) form a disordered region.

It belongs to the NFYB/HAP3 subunit family. Heterotrimeric transcription factor composed of three components, NF-YA, NF-YB and NF-YC. NF-YB and NF-YC must interact and dimerize for NF-YA association and DNA binding. Interacts with MADS18. Forms a ternary complex with the MADS6-MADS18 heterodimer. As to expression, expressed in developing kernels.

It localises to the nucleus. In terms of biological role, component of the NF-Y/HAP transcription factor complex. The NF-Y complex stimulates the transcription of various genes by recognizing and binding to a CCAAT motif in promoters. May act through association with MADS-box proteins. May regulate the expression of genes involved in flowering. This chain is Nuclear transcription factor Y subunit B-1 (NFYB1), found in Oryza sativa subsp. japonica (Rice).